The sequence spans 599 residues: UvrABC system protein C (599 aa).

Residues 18-96 form the GIY-YIG domain; the sequence is QLPGVYRMLG…IKQHRPPYNI (79 aa). Residues 207–242 form the UVR domain; it reads KELNQELIAKMEEAAEQLAFEKAMFYRDRLGLLREV.

The protein belongs to the UvrC family. Interacts with UvrB in an incision complex.

It localises to the cytoplasm. The UvrABC repair system catalyzes the recognition and processing of DNA lesions. UvrC both incises the 5' and 3' sides of the lesion. The N-terminal half is responsible for the 3' incision and the C-terminal half is responsible for the 5' incision. In Acinetobacter baylyi (strain ATCC 33305 / BD413 / ADP1), this protein is UvrABC system protein C.